Consider the following 153-residue polypeptide: SsrA-binding protein (153 aa).

The span at 132–142 (ALKRKEAEREA) shows a compositional bias: basic and acidic residues. The segment at 132-153 (ALKRKEAEREAQSAMKRYAKGY) is disordered.

Belongs to the SmpB family.

The protein resides in the cytoplasm. Functionally, required for rescue of stalled ribosomes mediated by trans-translation. Binds to transfer-messenger RNA (tmRNA), required for stable association of tmRNA with ribosomes. tmRNA and SmpB together mimic tRNA shape, replacing the anticodon stem-loop with SmpB. tmRNA is encoded by the ssrA gene; the 2 termini fold to resemble tRNA(Ala) and it encodes a 'tag peptide', a short internal open reading frame. During trans-translation Ala-aminoacylated tmRNA acts like a tRNA, entering the A-site of stalled ribosomes, displacing the stalled mRNA. The ribosome then switches to translate the ORF on the tmRNA; the nascent peptide is terminated with the 'tag peptide' encoded by the tmRNA and targeted for degradation. The ribosome is freed to recommence translation, which seems to be the essential function of trans-translation. This chain is SsrA-binding protein, found in Campylobacter hominis (strain ATCC BAA-381 / DSM 21671 / CCUG 45161 / LMG 19568 / NCTC 13146 / CH001A).